A 542-amino-acid polypeptide reads, in one-letter code: Organic anion transporter 3 (542 aa).

Over 1–20 the chain is Cytoplasmic; that stretch reads MTFSEILDRVGSMGRFQFLH. Ser4 carries the phosphoserine modification. Residues 21 to 41 traverse the membrane as a helical segment; the sequence is VAILGLPILNMANHNLLQIFT. The Extracellular portion of the chain corresponds to 42-123; that stretch reads AATPVHHCRP…LVCNSNKLKE (82 aa). Asn86 carries N-linked (GlcNAc...) asparagine glycosylation. Residues 124–144 form a helical membrane-spanning segment; it reads MAQSIFMAGILIGGLVLGDLS. Residues 145–154 are Cytoplasmic-facing; the sequence is DRFGRRPILT. Residues 155 to 175 form a helical membrane-spanning segment; that stretch reads CSYLLLAASGSGAAFSPTFPI. Residue Tyr176 is a topological domain, extracellular. The chain crosses the membrane as a helical span at residues 177–197; sequence MVFRFLCGFGISGITLSTVIL. The Cytoplasmic portion of the chain corresponds to 198–212; the sequence is NVEWVPTRMRAIMST. A helical membrane pass occupies residues 213-233; that stretch reads ALGYCYTFGQFILPGLAYAIP. The Extracellular portion of the chain corresponds to 234-236; it reads QWR. A helical membrane pass occupies residues 237–257; sequence WLQLTVSIPFFIFFLSSWWTP. Residues 258–327 lie on the Cytoplasmic side of the membrane; it reads ESIRWLVLSG…FRIPMLRRMT (70 aa). A helical transmembrane segment spans residues 328-348; that stretch reads FCLSLAWFATGFAYYSLAMGV. Residues 349-354 are Extracellular-facing; that stretch reads EEFGVN. Residues 355–375 traverse the membrane as a helical segment; that stretch reads LYILQIIFGGVDVPAKFITIL. Residues 376-386 lie on the Cytoplasmic side of the membrane; it reads SLSYLGRHTTQ. The helical transmembrane segment at 387–407 threads the bilayer; it reads AAALLLAGGAILALTFVPLDL. At 408–471 the chain is on the extracellular side; that stretch reads QTVRTVLAVF…LVKITGEVQP (64 aa). The helical transmembrane segment at 472-492 threads the bilayer; sequence FIPNIIYGITALLGGSAAFFL. At 493–542 the chain is on the cytoplasmic side; that stretch reads PETLNQPLPETIEDLENWSLRAKKPKQEPEVEKASQRIPLQPHGPGLGSS. The tract at residues 515 to 542 is disordered; sequence KKPKQEPEVEKASQRIPLQPHGPGLGSS. Basic and acidic residues predominate over residues 517 to 527; it reads PKQEPEVEKAS.

This sequence belongs to the major facilitator (TC 2.A.1) superfamily. Organic cation transporter (TC 2.A.1.19) family.

Its subcellular location is the basolateral cell membrane. It carries out the reaction estrone 3-sulfate(out) + glutarate(in) = estrone 3-sulfate(in) + glutarate(out). It catalyses the reaction estrone 3-sulfate(in) + 2-oxoglutarate(out) = estrone 3-sulfate(out) + 2-oxoglutarate(in). The enzyme catalyses glutarate(in) + 2-oxoglutarate(out) = glutarate(out) + 2-oxoglutarate(in). The catalysed reaction is urate(in) + 2-oxoglutarate(out) = urate(out) + 2-oxoglutarate(in). It carries out the reaction taurocholate(out) + glutarate(in) = taurocholate(in) + glutarate(out). It catalyses the reaction dehydroepiandrosterone 3-sulfate(out) + glutarate(in) = dehydroepiandrosterone 3-sulfate(in) + glutarate(out). The enzyme catalyses prostaglandin F2alpha(out) + glutarate(in) = prostaglandin F2alpha(in) + glutarate(out). The catalysed reaction is prostaglandin F2alpha(out) + 2-oxoglutarate(in) = prostaglandin F2alpha(in) + 2-oxoglutarate(out). It carries out the reaction (R)-carnitine(out) + 2-oxoglutarate(in) = (R)-carnitine(in) + 2-oxoglutarate(out). It catalyses the reaction glutarate(in) + (R)-carnitine(out) = glutarate(out) + (R)-carnitine(in). The enzyme catalyses prostaglandin E2(out) + 2-oxoglutarate(in) = prostaglandin E2(in) + 2-oxoglutarate(out). The catalysed reaction is prostaglandin E2(out) + glutarate(in) = prostaglandin E2(in) + glutarate(out). It carries out the reaction urate(in) + glutarate(out) = urate(out) + glutarate(in). It catalyses the reaction taurocholate(out) + 2-oxoglutarate(in) = taurocholate(in) + 2-oxoglutarate(out). The enzyme catalyses dehydroepiandrosterone 3-sulfate(out) + 2-oxoglutarate(in) = dehydroepiandrosterone 3-sulfate(in) + 2-oxoglutarate(out). The catalysed reaction is kynurenate(out) + a dicarboxylate(in) = kynurenate(in) + a dicarboxylate(out). It carries out the reaction (indol-3-yl)acetate(out) + a dicarboxylate(in) = (indol-3-yl)acetate(in) + a dicarboxylate(out). It catalyses the reaction indoxyl sulfate(out) + a dicarboxylate(in) = indoxyl sulfate(in) + a dicarboxylate(out). The enzyme catalyses N-benzoylglycine(out) + a dicarboxylate(in) = N-benzoylglycine(in) + a dicarboxylate(out). The catalysed reaction is 3-carboxy-4-methyl-5-propyl-2-furanpropanoate(out) + a dicarboxylate(in) = 3-carboxy-4-methyl-5-propyl-2-furanpropanoate(in) + a dicarboxylate(out). It carries out the reaction (6R)-L-erythro-5,6,7,8-tetrahydrobiopterin(out) + a dicarboxylate(in) = (6R)-L-erythro-5,6,7,8-tetrahydrobiopterin(in) + a dicarboxylate(out). It catalyses the reaction L-erythro-7,8-dihydrobiopterin(out) + a dicarboxylate(in) = L-erythro-7,8-dihydrobiopterin(in) + a dicarboxylate(out). The enzyme catalyses L-sepiapterin(out) + a dicarboxylate(in) = L-sepiapterin(in) + a dicarboxylate(out). Its function is as follows. Functions as an organic anion/dicarboxylate exchanger that couples organic anion uptake indirectly to the sodium gradient. Transports organic anions such as estrone 3-sulfate (E1S) and urate in exchange for dicarboxylates such as glutarate or ketoglutarate (2-oxoglutarate). Plays an important role in the excretion of endogenous and exogenous organic anions, especially from the kidney and the brain. E1S transport is pH- and chloride-dependent and may also involve E1S/cGMP exchange. Responsible for the transport of prostaglandin E2 (PGE2) and prostaglandin F2(alpha) (PGF2(alpha)) in the basolateral side of the renal tubule. Involved in the transport of neuroactive tryptophan metabolites kynurenate and xanthurenate. Functions as a biopterin transporters involved in the uptake and the secretion of coenzymes tetrahydrobiopterin (BH4), dihydrobiopterin (BH2) and sepiapterin to urine, thereby determining baseline levels of blood biopterins. May be involved in the basolateral transport of steviol, a metabolite of the popular sugar substitute stevioside. May participate in the detoxification/ renal excretion of drugs and xenobiotics, such as the histamine H(2)-receptor antagonists fexofenadine and cimetidine, the antibiotic benzylpenicillin (PCG), the anionic herbicide 2,4-dichloro-phenoxyacetate (2,4-D), the diagnostic agent p-aminohippurate (PAH), the antiviral acyclovir (ACV), and the mycotoxin ochratoxin (OTA), by transporting these exogenous organic anions across the cell membrane in exchange for dicarboxylates such as 2-oxoglutarate. Contributes to the renal uptake of potent uremic toxins (indoxyl sulfate (IS), indole acetate (IA), hippurate/N-benzoylglycine (HA) and 3-carboxy-4-methyl-5-propyl-2-furanpropionate (CMPF)), pravastatin, PCG, E1S and dehydroepiandrosterone sulfate (DHEAS), and is partly involved in the renal uptake of temocaprilat (an angiotensin-converting enzyme (ACE) inhibitor). May contribute to the release of cortisol in the adrenals. Involved in one of the detoxification systems on the choroid plexus (CP), removes substrates such as E1S or taurocholate (TC), PCG, 2,4-D and PAH, from the cerebrospinal fluid (CSF) to the blood for eventual excretion in urine and bile. Also contributes to the uptake of several other organic compounds such as the prostanoids prostaglandin E(2) and prostaglandin F(2-alpha), L-carnitine, and the therapeutic drugs allopurinol, 6-mercaptopurine (6-MP) and 5-fluorouracil (5-FU). Mediates the transport of PAH, PCG, and the statins pravastatin and pitavastatin, from the cerebrum into the blood circulation across the blood-brain barrier (BBB). In summary, plays a role in the efflux of drugs and xenobiotics, helping reduce their undesired toxicological effects on the body. The sequence is that of Organic anion transporter 3 (SLC22A8) from Pongo abelii (Sumatran orangutan).